The following is a 287-amino-acid chain: ATP synthase gamma chain (287 aa).

The protein belongs to the ATPase gamma chain family. In terms of assembly, F-type ATPases have 2 components, CF(1) - the catalytic core - and CF(0) - the membrane proton channel. CF(1) has five subunits: alpha(3), beta(3), gamma(1), delta(1), epsilon(1). CF(0) has three main subunits: a, b and c.

It localises to the cell inner membrane. Functionally, produces ATP from ADP in the presence of a proton gradient across the membrane. The gamma chain is believed to be important in regulating ATPase activity and the flow of protons through the CF(0) complex. This Colwellia maris protein is ATP synthase gamma chain.